The following is a 162-amino-acid chain: Caveolin-2 (162 aa).

The Cytoplasmic portion of the chain corresponds to 1–86 (MGLETEKADV…FEISKYIIYK (86 aa)). Y19 is subject to Phosphotyrosine; by SRC. A phosphoserine mark is found at S20 and S23. Residue Y27 is modified to Phosphotyrosine; by SRC. The helical intramembrane region spans 87-107 (FLTVFLAIPLAFAAGILFATL). Residues 108 to 162 (SCLHIWITMPFVKTCLMVLPSVQTIWKSVTDVAIAPLCTSVGRSFSSVSLQLSHD) lie on the Cytoplasmic side of the membrane.

This sequence belongs to the caveolin family. In terms of assembly, monomer or homodimer. Interacts with CAV1; the interaction forms a stable heterooligomeric complex that is required for targeting to lipid rafts and for caveolae formation. Tyrosine phosphorylated forms do not form heterooligomers with the Tyr-19-phosphorylated form existing as a monomer or dimer, and the Tyr-27-form as a monomer only. Interacts (tyrosine phosphorylated form) with the SH2 domain-containing proteins, RASA1, NCK1 and SRC. Interacts (tyrosine phosphorylated form) with INSR, the interaction (Tyr-27-phosphorylated form) is increased on insulin stimulation. Interacts (Tyr-19 phosphorylated form) with MAPK1 (phosphorylated form); the interaction, promoted by insulin, leads to nuclear location and MAPK1 activation. Interacts with STAT3; the interaction is increased on insulin-induced tyrosine phosphorylation leading to STAT activation. In terms of processing, phosphorylated on serine and tyrosine residues. CAV1 promotes phosphorylation on Ser-23 which then targets the complex to the plasma membrane, lipid rafts and caveolae. Phosphorylation on both Tyr-19 and Tyr-27 is required for insulin-induced 'Ser-727' phosphorylation of STAT3 and its activation. Phosphorylation on Tyr-19 is required for insulin-induced phosphorylation of MAPK1 and DNA binding of STAT3. Tyrosine phosphorylation is induced by both EGF and insulin.

Its subcellular location is the nucleus. It is found in the cytoplasm. The protein localises to the golgi apparatus membrane. The protein resides in the cell membrane. It localises to the membrane. Its subcellular location is the caveola. In terms of biological role, may act as a scaffolding protein within caveolar membranes. Interacts directly with G-protein alpha subunits and can functionally regulate their activity. Acts as an accessory protein in conjunction with CAV1 in targeting to lipid rafts and driving caveolae formation. Positive regulator of cellular mitogenesis of the MAPK signaling pathway. Required for the insulin-stimulated nuclear translocation and activation of MAPK1 and STAT3, and the subsequent regulation of cell cycle progression. This Dasypus novemcinctus (Nine-banded armadillo) protein is Caveolin-2 (CAV2).